The primary structure comprises 443 residues: Xaa-Pro dipeptidase (443 aa).

Aspartate 246, aspartate 257, histidine 339, glutamate 384, and glutamate 423 together coordinate Mn(2+).

Belongs to the peptidase M24B family. Bacterial-type prolidase subfamily. It depends on Mn(2+) as a cofactor.

It carries out the reaction Xaa-L-Pro dipeptide + H2O = an L-alpha-amino acid + L-proline. Functionally, splits dipeptides with a prolyl residue in the C-terminal position. The protein is Xaa-Pro dipeptidase of Escherichia fergusonii (strain ATCC 35469 / DSM 13698 / CCUG 18766 / IAM 14443 / JCM 21226 / LMG 7866 / NBRC 102419 / NCTC 12128 / CDC 0568-73).